Consider the following 492-residue polypeptide: N-succinylglutamate 5-semialdehyde dehydrogenase (492 aa).

220 to 225 (GSANTG) contacts NAD(+). Residues glutamate 243 and cysteine 277 contribute to the active site.

This sequence belongs to the aldehyde dehydrogenase family. AstD subfamily.

The catalysed reaction is N-succinyl-L-glutamate 5-semialdehyde + NAD(+) + H2O = N-succinyl-L-glutamate + NADH + 2 H(+). The protein operates within amino-acid degradation; L-arginine degradation via AST pathway; L-glutamate and succinate from L-arginine: step 4/5. Functionally, catalyzes the NAD-dependent reduction of succinylglutamate semialdehyde into succinylglutamate. The polypeptide is N-succinylglutamate 5-semialdehyde dehydrogenase (Escherichia coli (strain K12 / MC4100 / BW2952)).